The sequence spans 318 residues: Nucleotide-binding protein Jann_0539 (318 aa).

17-24 (GPSGAGRS) provides a ligand contact to ATP. 64 to 67 (DPRT) is a binding site for GTP. Positions 278–318 (GWQVSKRHRDVDKDASENSDRDRGASARTAASTDDGEAEQP) are disordered. Over residues 286–302 (RDVDKDASENSDRDRGA) the composition is skewed to basic and acidic residues.

This sequence belongs to the RapZ-like family.

In terms of biological role, displays ATPase and GTPase activities. The protein is Nucleotide-binding protein Jann_0539 of Jannaschia sp. (strain CCS1).